We begin with the raw amino-acid sequence, 103 residues long: Large ribosomal subunit protein uL23 (103 aa).

Belongs to the universal ribosomal protein uL23 family. Part of the 50S ribosomal subunit. Contacts protein L29, and trigger factor when it is bound to the ribosome.

Functionally, one of the early assembly proteins it binds 23S rRNA. One of the proteins that surrounds the polypeptide exit tunnel on the outside of the ribosome. Forms the main docking site for trigger factor binding to the ribosome. The protein is Large ribosomal subunit protein uL23 of Chlorobium chlorochromatii (strain CaD3).